The primary structure comprises 416 residues: MSKADIIVGIQWGDEGKGKVVDKLCENYDFVCRSAGGHNAGHTIWVNGVRYALHLMPSGVLHPRCINIIGNGVVVSPEVLIAEMAQFENLKGRLYISDRAHLNLKHHSLIDIAKEKLKGKNAIGTTGKGIGPSYADKINRTGHRVGELLEPQRLCEALIKDFEANKTFFEMLEIEIPSAEELLADLKRFNEILTPYITDTTRMLWKALDEDKRVLLEGAQGSMLDIDHGTYPYVTSSSTISAGTLTGLGLNPKEAGNIIGIVKAYATRVGNGAFPTEDKGEDGEKIAQIGKEIGVSTGRKRRCGWFDAVAVRYTARLNGLDALSLMKLDVLDGFEKIKICRAYEYKGMEIDYIPSDLENVQPIYEEMDGWDKVFGIKDYDLLPENAKKYIARLEELAGVKVKYISTSPERDDTIIL.

Residues 13 to 19 and 41 to 43 contribute to the GTP site; these read GDEGKGK and GHT. D14 (proton acceptor) is an active-site residue. Residues D14 and G41 each contribute to the Mg(2+) site. IMP contacts are provided by residues 14–17, 39–42, T126, R140, Q220, T235, and R299; these read DEGK and NAGH. H42 functions as the Proton donor in the catalytic mechanism. 295–301 is a binding site for substrate; it reads VSTGRKR. GTP is bound by residues R301, 327–329, and 405–407; these read KLD and STS.

This sequence belongs to the adenylosuccinate synthetase family. In terms of assembly, homodimer. Mg(2+) serves as cofactor.

It localises to the cytoplasm. The enzyme catalyses IMP + L-aspartate + GTP = N(6)-(1,2-dicarboxyethyl)-AMP + GDP + phosphate + 2 H(+). It functions in the pathway purine metabolism; AMP biosynthesis via de novo pathway; AMP from IMP: step 1/2. Plays an important role in the de novo pathway of purine nucleotide biosynthesis. Catalyzes the first committed step in the biosynthesis of AMP from IMP. This is Adenylosuccinate synthetase from Campylobacter jejuni subsp. jejuni serotype O:2 (strain ATCC 700819 / NCTC 11168).